Consider the following 68-residue polypeptide: DNA-directed RNA polymerase subunit omega (68 aa).

It belongs to the RNA polymerase subunit omega family. The RNAP catalytic core consists of 2 alpha, 1 beta, 1 beta' and 1 omega subunit. When a sigma factor is associated with the core the holoenzyme is formed, which can initiate transcription.

It carries out the reaction RNA(n) + a ribonucleoside 5'-triphosphate = RNA(n+1) + diphosphate. Its function is as follows. Promotes RNA polymerase assembly. Latches the N- and C-terminal regions of the beta' subunit thereby facilitating its interaction with the beta and alpha subunits. This is DNA-directed RNA polymerase subunit omega from Chromobacterium violaceum (strain ATCC 12472 / DSM 30191 / JCM 1249 / CCUG 213 / NBRC 12614 / NCIMB 9131 / NCTC 9757 / MK).